Consider the following 285-residue polypeptide: Methionine aminopeptidase 2 (285 aa).

Position 114 (His-114) interacts with substrate. 3 residues coordinate a divalent metal cation: Asp-131, Asp-142, and His-205. A substrate-binding site is contributed by His-212. A divalent metal cation contacts are provided by Glu-238 and Glu-269.

In terms of assembly, monomer. The cofactor is Co(2+). Zn(2+) serves as cofactor. Requires Mn(2+) as cofactor. It depends on Fe(2+) as a cofactor.

The catalysed reaction is Release of N-terminal amino acids, preferentially methionine, from peptides and arylamides.. Inhibited by bengamide derivatives and by various metalloform-selective inhibitors. Functionally, removes the N-terminal methionine from nascent proteins. The N-terminal methionine is often cleaved when the second residue in the primary sequence is small and uncharged (Met-Ala-, Cys, Gly, Pro, Ser, Thr, or Val). Requires deformylation of the N(alpha)-formylated initiator methionine before it can be hydrolyzed. The chain is Methionine aminopeptidase 2 from Mycobacterium tuberculosis (strain ATCC 25618 / H37Rv).